We begin with the raw amino-acid sequence, 262 residues long: Tryptophan synthase alpha chain (262 aa).

Catalysis depends on proton acceptor residues Glu48 and Asp59.

Belongs to the TrpA family. As to quaternary structure, tetramer of two alpha and two beta chains.

It carries out the reaction (1S,2R)-1-C-(indol-3-yl)glycerol 3-phosphate + L-serine = D-glyceraldehyde 3-phosphate + L-tryptophan + H2O. It participates in amino-acid biosynthesis; L-tryptophan biosynthesis; L-tryptophan from chorismate: step 5/5. The alpha subunit is responsible for the aldol cleavage of indoleglycerol phosphate to indole and glyceraldehyde 3-phosphate. The chain is Tryptophan synthase alpha chain from Helicobacter pylori (strain P12).